Reading from the N-terminus, the 359-residue chain is Holliday junction branch migration complex subunit RuvB (359 aa).

The large ATPase domain (RuvB-L) stretch occupies residues Met-1–Tyr-187. Residues Leu-26, Arg-27, Gly-68, Lys-71, Thr-72, Thr-73, Glu-134–Tyr-136, Arg-177, Tyr-187, and Arg-224 contribute to the ATP site. Position 72 (Thr-72) interacts with Mg(2+). The interval Glu-188–Asp-257 is small ATPAse domain (RuvB-S). The interval Pro-260–Leu-359 is head domain (RuvB-H). DNA contacts are provided by Arg-315 and Arg-320.

It belongs to the RuvB family. Homohexamer. Forms an RuvA(8)-RuvB(12)-Holliday junction (HJ) complex. HJ DNA is sandwiched between 2 RuvA tetramers; dsDNA enters through RuvA and exits via RuvB. An RuvB hexamer assembles on each DNA strand where it exits the tetramer. Each RuvB hexamer is contacted by two RuvA subunits (via domain III) on 2 adjacent RuvB subunits; this complex drives branch migration. In the full resolvosome a probable DNA-RuvA(4)-RuvB(12)-RuvC(2) complex forms which resolves the HJ.

It localises to the cytoplasm. It carries out the reaction ATP + H2O = ADP + phosphate + H(+). Functionally, the RuvA-RuvB-RuvC complex processes Holliday junction (HJ) DNA during genetic recombination and DNA repair, while the RuvA-RuvB complex plays an important role in the rescue of blocked DNA replication forks via replication fork reversal (RFR). RuvA specifically binds to HJ cruciform DNA, conferring on it an open structure. The RuvB hexamer acts as an ATP-dependent pump, pulling dsDNA into and through the RuvAB complex. RuvB forms 2 homohexamers on either side of HJ DNA bound by 1 or 2 RuvA tetramers; 4 subunits per hexamer contact DNA at a time. Coordinated motions by a converter formed by DNA-disengaged RuvB subunits stimulates ATP hydrolysis and nucleotide exchange. Immobilization of the converter enables RuvB to convert the ATP-contained energy into a lever motion, pulling 2 nucleotides of DNA out of the RuvA tetramer per ATP hydrolyzed, thus driving DNA branch migration. The RuvB motors rotate together with the DNA substrate, which together with the progressing nucleotide cycle form the mechanistic basis for DNA recombination by continuous HJ branch migration. Branch migration allows RuvC to scan DNA until it finds its consensus sequence, where it cleaves and resolves cruciform DNA. This chain is Holliday junction branch migration complex subunit RuvB, found in Clavibacter michiganensis subsp. michiganensis (strain NCPPB 382).